The primary structure comprises 213 residues: Orotate phosphoribosyltransferase (213 aa).

Residue Lys-26 participates in 5-phospho-alpha-D-ribose 1-diphosphate binding. 34–35 (FF) is an orotate binding site. Residues 72 to 73 (YK), Arg-98, Lys-99, Lys-102, and 123 to 131 (DDVISAGTS) contribute to the 5-phospho-alpha-D-ribose 1-diphosphate site. 2 residues coordinate orotate: Ser-127 and Arg-155.

The protein belongs to the purine/pyrimidine phosphoribosyltransferase family. PyrE subfamily. As to quaternary structure, homodimer. It depends on Mg(2+) as a cofactor.

It catalyses the reaction orotidine 5'-phosphate + diphosphate = orotate + 5-phospho-alpha-D-ribose 1-diphosphate. It participates in pyrimidine metabolism; UMP biosynthesis via de novo pathway; UMP from orotate: step 1/2. Its function is as follows. Catalyzes the transfer of a ribosyl phosphate group from 5-phosphoribose 1-diphosphate to orotate, leading to the formation of orotidine monophosphate (OMP). This chain is Orotate phosphoribosyltransferase, found in Neisseria gonorrhoeae (strain NCCP11945).